The sequence spans 350 residues: Patr class I histocompatibility antigen, alpha chain E (350 aa).

An N-terminal signal peptide occupies residues 1–21 (MVDGTLLLLLSEALALTQTWA). Residues 22-111 (GSHSLKYFHT…LRGYYNQSEA (90 aa)) are alpha-1. Residues 22-305 (GSHSLKYFHT…KPASQPTIPI (284 aa)) lie on the Extracellular side of the membrane. An N-linked (GlcNAc...) asparagine glycan is attached at N107. The tract at residues 112–203 (GSHTLQWMHG…EKGKETLLHL (92 aa)) is alpha-2. 2 disulfides stabilise this stretch: C122–C185 and C224–C280. Residues 204–295 (EPPKTHVTHH…GLPEPLTLRW (92 aa)) form an alpha-3 region. Residues 206–294 (PKTHVTHHPI…EGLPEPLTLR (89 aa)) form the Ig-like C1-type domain. Residues 296 to 305 (KPASQPTIPI) form a connecting peptide region. A helical membrane pass occupies residues 306-329 (VGIIAGLVLLGSVVSGAVVAAVMW). The Cytoplasmic segment spans residues 330–350 (RKKSSGGKGRSYSKAEWSDSA).

This sequence belongs to the MHC class I family. As to quaternary structure, heterodimer of an alpha chain and a beta chain (beta-2-microglobulin).

The protein localises to the membrane. Its function is as follows. Preferably binds to a peptide derived from the signal sequence of most HLA-A, -B, -C and -G molecules. The chain is Patr class I histocompatibility antigen, alpha chain E (Patr-E) from Pan troglodytes (Chimpanzee).